Consider the following 122-residue polypeptide: Large ribosomal subunit protein uL14 (122 aa).

This sequence belongs to the universal ribosomal protein uL14 family. Part of the 50S ribosomal subunit. Forms a cluster with proteins L3 and L19. In the 70S ribosome, L14 and L19 interact and together make contacts with the 16S rRNA in bridges B5 and B8.

In terms of biological role, binds to 23S rRNA. Forms part of two intersubunit bridges in the 70S ribosome. The sequence is that of Large ribosomal subunit protein uL14 from Sorangium cellulosum (strain So ce56) (Polyangium cellulosum (strain So ce56)).